The following is a 307-amino-acid chain: Putative F-box/LRR-repeat protein 22 (307 aa).

Polar residues predominate over residues 1–15 (MVTSSSSPPLATSQL). The tract at residues 1-26 (MVTSSSSPPLATSQLPVMKGEEKPSN) is disordered. An F-box domain is found at 24–71 (PSNWAELPPDLLSSILLRLSPLEILENARKVCRSWRRVSKDPLIWRRI). 5 LRR repeats span residues 108–133 (WRFQ…RVKG), 158–183 (YCSI…KLVG), 185–210 (WSHL…HLQL), 212–237 (SNGL…DLRQ), and 244–270 (FGDL…DYNY). Over residues 279–289 (IEDEKGEEEEN) the composition is skewed to acidic residues. The tract at residues 279-307 (IEDEKGEEEENYSYGSDDTEYGYRRSADF) is disordered.

The polypeptide is Putative F-box/LRR-repeat protein 22 (FBL22) (Arabidopsis thaliana (Mouse-ear cress)).